We begin with the raw amino-acid sequence, 279 residues long: Putative carbamate hydrolase RutD (279 aa).

The region spanning 23-126 (PVVVLISGLG…LVSVNGWLRI (104 aa)) is the AB hydrolase-1 domain.

It belongs to the AB hydrolase superfamily. Hydrolase RutD family.

It catalyses the reaction carbamate + 2 H(+) = NH4(+) + CO2. Its function is as follows. Involved in pyrimidine catabolism. May facilitate the hydrolysis of carbamate, a reaction that can also occur spontaneously. This Escherichia coli O17:K52:H18 (strain UMN026 / ExPEC) protein is Putative carbamate hydrolase RutD.